A 133-amino-acid polypeptide reads, in one-letter code: Small ribosomal subunit protein uS8 (133 aa).

It belongs to the universal ribosomal protein uS8 family. As to quaternary structure, part of the 30S ribosomal subunit. Contacts proteins S5 and S12.

One of the primary rRNA binding proteins, it binds directly to 16S rRNA central domain where it helps coordinate assembly of the platform of the 30S subunit. In Chlamydia abortus (strain DSM 27085 / S26/3) (Chlamydophila abortus), this protein is Small ribosomal subunit protein uS8.